The primary structure comprises 602 residues: Aspartate--tRNA(Asp/Asn) ligase (602 aa).

Glu176 is an L-aspartate binding site. An aspartate region spans residues 200–203 (QQFK). L-aspartate is bound by residues Arg222 and His452. ATP is bound at residue 222–224 (RDE). Glu490 provides a ligand contact to ATP. Arg497 contacts L-aspartate. 542–545 (GIDR) provides a ligand contact to ATP.

Belongs to the class-II aminoacyl-tRNA synthetase family. Type 1 subfamily. In terms of assembly, homodimer.

The protein resides in the cytoplasm. It carries out the reaction tRNA(Asx) + L-aspartate + ATP = L-aspartyl-tRNA(Asx) + AMP + diphosphate. Aspartyl-tRNA synthetase with relaxed tRNA specificity since it is able to aspartylate not only its cognate tRNA(Asp) but also tRNA(Asn). Reaction proceeds in two steps: L-aspartate is first activated by ATP to form Asp-AMP and then transferred to the acceptor end of tRNA(Asp/Asn). This Rickettsia africae (strain ESF-5) protein is Aspartate--tRNA(Asp/Asn) ligase.